A 745-amino-acid polypeptide reads, in one-letter code: NAD(P)H-quinone oxidoreductase subunit 5, chloroplastic (745 aa).

Helical transmembrane passes span 9–29, 50–70, 99–119, 135–155, 157–177, 194–214, 229–249, 268–288, 290–310, 337–357, 364–384, 406–426, 435–455, 550–570, 610–630, and 724–744; these read WIIPFVPLPIPILIGMGLLLF, WAFPNILLLSIVMIFSLDLSI, IDSLTSIMSILITTVGIFVLI, FAYMSLFNTSMLGLVTSCNLI, IYIFWELVGMCSYLLIGFWFT, IGDFGLLLGILGFYWITGSFE, NEVHFLFVTLCASLLFAGAVA, TPISALIHAATMVAAGIFLVA, LFPLFIVIPYIMNLISLIGII, LGYMMLALGMGSYRAALFHLI, ALLFLASGSIIHSMEAIVGYS, IAFLVGTLSLCGIPPLACFWS, WLYSPIFAIIAWSTAGLTAFY, LFPMLILLLFTLFVGAIAIPF, FSVSIACFGIFTAFLLYKPFY, and FYLLLYLVYVFIFLVISYFIL.

This sequence belongs to the complex I subunit 5 family. As to quaternary structure, NDH is composed of at least 16 different subunits, 5 of which are encoded in the nucleus.

It localises to the plastid. Its subcellular location is the chloroplast thylakoid membrane. It carries out the reaction a plastoquinone + NADH + (n+1) H(+)(in) = a plastoquinol + NAD(+) + n H(+)(out). It catalyses the reaction a plastoquinone + NADPH + (n+1) H(+)(in) = a plastoquinol + NADP(+) + n H(+)(out). Its function is as follows. NDH shuttles electrons from NAD(P)H:plastoquinone, via FMN and iron-sulfur (Fe-S) centers, to quinones in the photosynthetic chain and possibly in a chloroplast respiratory chain. The immediate electron acceptor for the enzyme in this species is believed to be plastoquinone. Couples the redox reaction to proton translocation, and thus conserves the redox energy in a proton gradient. The protein is NAD(P)H-quinone oxidoreductase subunit 5, chloroplastic (ndhF) of Gossypium barbadense (Sea Island cotton).